Reading from the N-terminus, the 250-residue chain is Proteasome subunit alpha (250 aa).

The protein belongs to the peptidase T1A family. The 20S proteasome core is composed of 14 alpha and 14 beta subunits that assemble into four stacked heptameric rings, resulting in a barrel-shaped structure. The two inner rings, each composed of seven catalytic beta subunits, are sandwiched by two outer rings, each composed of seven alpha subunits. The catalytic chamber with the active sites is on the inside of the barrel. Has a gated structure, the ends of the cylinder being occluded by the N-termini of the alpha-subunits. Is capped at one or both ends by the proteasome regulatory ATPase, PAN.

It is found in the cytoplasm. The formation of the proteasomal ATPase PAN-20S proteasome complex, via the docking of the C-termini of PAN into the intersubunit pockets in the alpha-rings, triggers opening of the gate for substrate entry. Interconversion between the open-gate and close-gate conformations leads to a dynamic regulation of the 20S proteasome proteolysis activity. Component of the proteasome core, a large protease complex with broad specificity involved in protein degradation. This is Proteasome subunit alpha from Haloquadratum walsbyi (strain DSM 16790 / HBSQ001).